The following is a 175-amino-acid chain: Translation initiation factor IF-3 (175 aa).

Belongs to the IF-3 family. Monomer.

The protein localises to the cytoplasm. In terms of biological role, IF-3 binds to the 30S ribosomal subunit and shifts the equilibrium between 70S ribosomes and their 50S and 30S subunits in favor of the free subunits, thus enhancing the availability of 30S subunits on which protein synthesis initiation begins. The sequence is that of Translation initiation factor IF-3 from Staphylococcus carnosus (strain TM300).